The sequence spans 312 residues: Urease accessory protein UreD (312 aa).

The segment covering methionine 1–glutamine 15 has biased composition (basic and acidic residues). Residues methionine 1–valine 24 are disordered.

It belongs to the UreD family. UreD, UreF and UreG form a complex that acts as a GTP-hydrolysis-dependent molecular chaperone, activating the urease apoprotein by helping to assemble the nickel containing metallocenter of UreC. The UreE protein probably delivers the nickel.

The protein resides in the cytoplasm. Its function is as follows. Required for maturation of urease via the functional incorporation of the urease nickel metallocenter. The polypeptide is Urease accessory protein UreD (Hahella chejuensis (strain KCTC 2396)).